A 134-amino-acid chain; its full sequence is Small ribosomal subunit protein uS8 (134 aa).

It belongs to the universal ribosomal protein uS8 family. Part of the 30S ribosomal subunit. Contacts proteins S5 and S12.

In terms of biological role, one of the primary rRNA binding proteins, it binds directly to 16S rRNA central domain where it helps coordinate assembly of the platform of the 30S subunit. This Fervidobacterium nodosum (strain ATCC 35602 / DSM 5306 / Rt17-B1) protein is Small ribosomal subunit protein uS8.